The sequence spans 427 residues: Peptidase B (427 aa).

K195 and D200 together coordinate Mn(2+). The active site involves K207. Positions 218, 277, and 279 each coordinate Mn(2+). The active site involves R281.

Belongs to the peptidase M17 family. In terms of assembly, homohexamer. It depends on Mn(2+) as a cofactor.

The protein resides in the cytoplasm. It catalyses the reaction Release of an N-terminal amino acid, Xaa, from a peptide or arylamide. Xaa is preferably Glu or Asp but may be other amino acids, including Leu, Met, His, Cys and Gln.. Probably plays an important role in intracellular peptide degradation. The sequence is that of Peptidase B from Escherichia coli (strain K12 / MC4100 / BW2952).